The chain runs to 447 residues: UDP-glycosyltransferase 79B9 (447 aa).

UDP-alpha-D-glucose-binding positions include Ser-260, 319–321 (VQQ), 336–344 (HCGFGSMWE), and 358–361 (LCDQ).

This sequence belongs to the UDP-glycosyltransferase family.

The chain is UDP-glycosyltransferase 79B9 (UGT79B9) from Arabidopsis thaliana (Mouse-ear cress).